Here is a 689-residue protein sequence, read N- to C-terminus: DNA ligase (689 aa).

Residues 51–55 (DSEYD), 100–101 (SL), and glutamate 129 contribute to the NAD(+) site. Lysine 131 serves as the catalytic N6-AMP-lysine intermediate. Residues arginine 152, glutamate 189, lysine 308, and lysine 332 each coordinate NAD(+). 4 residues coordinate Zn(2+): cysteine 426, cysteine 429, cysteine 444, and cysteine 450. The 81-residue stretch at 609–689 (ADEQPLKGQT…ELLALLAANR (81 aa)) folds into the BRCT domain.

The protein belongs to the NAD-dependent DNA ligase family. LigA subfamily. The cofactor is Mg(2+). Mn(2+) serves as cofactor.

It carries out the reaction NAD(+) + (deoxyribonucleotide)n-3'-hydroxyl + 5'-phospho-(deoxyribonucleotide)m = (deoxyribonucleotide)n+m + AMP + beta-nicotinamide D-nucleotide.. Functionally, DNA ligase that catalyzes the formation of phosphodiester linkages between 5'-phosphoryl and 3'-hydroxyl groups in double-stranded DNA using NAD as a coenzyme and as the energy source for the reaction. It is essential for DNA replication and repair of damaged DNA. The chain is DNA ligase from Shewanella oneidensis (strain ATCC 700550 / JCM 31522 / CIP 106686 / LMG 19005 / NCIMB 14063 / MR-1).